Here is a 152-residue protein sequence, read N- to C-terminus: Xanthine-guanine phosphoribosyltransferase (152 aa).

Residues 37-38 (RG), Arg-69, and 88-96 (DDLVDTGGT) contribute to the 5-phospho-alpha-D-ribose 1-diphosphate site. Arg-69 contributes to the GMP binding site. Mg(2+) is bound at residue Asp-89. Guanine is bound by residues Asp-92 and Ile-135. 2 residues coordinate xanthine: Asp-92 and Ile-135. Residues 92–96 (DTGGT) and 134–135 (WI) each bind GMP.

Belongs to the purine/pyrimidine phosphoribosyltransferase family. XGPT subfamily. Homotetramer. Mg(2+) is required as a cofactor.

It localises to the cell inner membrane. It carries out the reaction GMP + diphosphate = guanine + 5-phospho-alpha-D-ribose 1-diphosphate. The catalysed reaction is XMP + diphosphate = xanthine + 5-phospho-alpha-D-ribose 1-diphosphate. The enzyme catalyses IMP + diphosphate = hypoxanthine + 5-phospho-alpha-D-ribose 1-diphosphate. Its pathway is purine metabolism; GMP biosynthesis via salvage pathway; GMP from guanine: step 1/1. The protein operates within purine metabolism; XMP biosynthesis via salvage pathway; XMP from xanthine: step 1/1. Purine salvage pathway enzyme that catalyzes the transfer of the ribosyl-5-phosphate group from 5-phospho-alpha-D-ribose 1-diphosphate (PRPP) to the N9 position of the 6-oxopurines guanine and xanthine to form the corresponding ribonucleotides GMP (guanosine 5'-monophosphate) and XMP (xanthosine 5'-monophosphate), with the release of PPi. To a lesser extent, also acts on hypoxanthine. The sequence is that of Xanthine-guanine phosphoribosyltransferase from Escherichia fergusonii (strain ATCC 35469 / DSM 13698 / CCUG 18766 / IAM 14443 / JCM 21226 / LMG 7866 / NBRC 102419 / NCTC 12128 / CDC 0568-73).